The primary structure comprises 417 residues: NADH-quinone oxidoreductase subunit D (417 aa).

The protein belongs to the complex I 49 kDa subunit family. As to quaternary structure, NDH-1 is composed of 14 different subunits. Subunits NuoB, C, D, E, F, and G constitute the peripheral sector of the complex.

It is found in the cell inner membrane. The enzyme catalyses a quinone + NADH + 5 H(+)(in) = a quinol + NAD(+) + 4 H(+)(out). NDH-1 shuttles electrons from NADH, via FMN and iron-sulfur (Fe-S) centers, to quinones in the respiratory chain. The immediate electron acceptor for the enzyme in this species is believed to be ubiquinone. Couples the redox reaction to proton translocation (for every two electrons transferred, four hydrogen ions are translocated across the cytoplasmic membrane), and thus conserves the redox energy in a proton gradient. This is NADH-quinone oxidoreductase subunit D from Paracidovorax citrulli (strain AAC00-1) (Acidovorax citrulli).